The primary structure comprises 284 residues: 4-diphosphocytidyl-2-C-methyl-D-erythritol kinase (284 aa).

K14 is a catalytic residue. Residue 98 to 108 (PMGGGLGGGSS) coordinates ATP. Residue D140 is part of the active site.

Belongs to the GHMP kinase family. IspE subfamily.

It carries out the reaction 4-CDP-2-C-methyl-D-erythritol + ATP = 4-CDP-2-C-methyl-D-erythritol 2-phosphate + ADP + H(+). It functions in the pathway isoprenoid biosynthesis; isopentenyl diphosphate biosynthesis via DXP pathway; isopentenyl diphosphate from 1-deoxy-D-xylulose 5-phosphate: step 3/6. Its function is as follows. Catalyzes the phosphorylation of the position 2 hydroxy group of 4-diphosphocytidyl-2C-methyl-D-erythritol. The protein is 4-diphosphocytidyl-2-C-methyl-D-erythritol kinase of Shewanella piezotolerans (strain WP3 / JCM 13877).